We begin with the raw amino-acid sequence, 436 residues long: Chaperone SurA (436 aa).

The N-terminal stretch at 1 to 30 (MKFFQRPERRLKQWGLALLLAASALLPARA) is a signal peptide. PpiC domains lie at 180 to 281 (ETEY…KLVD) and 291 to 389 (VTQT…QVLE).

The protein localises to the periplasm. The catalysed reaction is [protein]-peptidylproline (omega=180) = [protein]-peptidylproline (omega=0). Its function is as follows. Chaperone involved in the correct folding and assembly of outer membrane proteins. Recognizes specific patterns of aromatic residues and the orientation of their side chains, which are found more frequently in integral outer membrane proteins. May act in both early periplasmic and late outer membrane-associated steps of protein maturation. The chain is Chaperone SurA from Thiobacillus denitrificans (strain ATCC 25259 / T1).